We begin with the raw amino-acid sequence, 210 residues long: Regulator of G-protein signaling 17 (210 aa).

The interval 1–21 (MRKRQQSQNEGTPAVSQAPGN) is disordered. One can recognise an RGS domain in the interval 84 to 200 (NFDKMMKAPA…LNSQIYKSFV (117 aa)). Tyrosine 137 is subject to Phosphotyrosine.

Interacts with GNAI1 and GNAQ. Interacts with GNAZ and GNAI2. Interacts with OPRM1. Forms a complex with mu-opioid receptors and G(alpha)z/i2 subunits, including GNAZ and GNAI2; the formation of this complex results in mu-opioid receptor desensitization. Interacts with HINT1. In terms of processing, N- and O-glycosylated in synapsomal membranes. Serine phosphorylated in synapsomal membranes. Post-translationally, sumoylated with SUMO1 and SUM02 in synaptosomes. The sumoylated forms act as a scaffold for sequestering mu-opioid receptor-activated G(alpha) subunits. Desumoylated by HINT1. As to expression, predominantly expressed in the cerebellum. Also expressed in the cortex and medulla. Weakly expressed in a number of peripheral tissues notably spleen, lung and leukocytes.

The protein localises to the membrane. The protein resides in the synapse. It localises to the synaptosome. It is found in the nucleus. Its subcellular location is the cytoplasm. Its function is as follows. Regulates G protein-coupled receptor signaling cascades, including signaling via muscarinic acetylcholine receptor CHRM2 and dopamine receptor DRD2. Inhibits signal transduction by increasing the GTPase activity of G protein alpha subunits, thereby driving them into their inactive GDP-bound form. Binds selectively to GNAZ and GNAI2 subunits, accelerates their GTPase activity and regulates their signaling activities. Negatively regulates mu-opioid receptor-mediated activation of the G-proteins. This chain is Regulator of G-protein signaling 17 (RGS17), found in Homo sapiens (Human).